Here is a 220-residue protein sequence, read N- to C-terminus: Splicing factor U2AF 26 kDa subunit (220 aa).

At alanine 2 the chain carries N-acetylalanine. The C3H1-type 1 zinc-finger motif lies at glutamate 12 to proline 40. An RRM domain is found at serine 65–valine 147. The C3H1-type 2 zinc-finger motif lies at aspartate 149–proline 176. Residues tyrosine 186–phenylalanine 220 are disordered. Residues glycine 189 to phenylalanine 220 show a composition bias toward basic residues.

The protein belongs to the splicing factor SR family. Interacts with GFI1, U2AF2 and C1QBP.

It is found in the nucleus. It localises to the nucleus speckle. Its subcellular location is the cytoplasm. Functionally, RNA-binding protein that function as a pre-mRNA splicing factor. Plays a critical role in both constitutive and enhancer-dependent splicing by mediating protein-protein interactions and protein-RNA interactions required for accurate 3'-splice site selection. Acts by enhancing the binding of U2AF2 to weak pyrimidine tracts. Also participates in the regulation of alternative pre-mRNA splicing. Activates exon 5 skipping of PTPRC during T-cell activation; an event reversed by GFI1. Binds to RNA at the AG dinucleotide at the 3'-splice site. Shows a preference for AGC or AGA. This chain is Splicing factor U2AF 26 kDa subunit (U2AF1L4), found in Bos taurus (Bovine).